The sequence spans 607 residues: UvrABC system protein C (607 aa).

Positions glycine 16–isoleucine 94 constitute a GIY-YIG domain. Residues glutamine 203 to valine 238 form the UVR domain.

It belongs to the UvrC family. In terms of assembly, interacts with UvrB in an incision complex.

It localises to the cytoplasm. In terms of biological role, the UvrABC repair system catalyzes the recognition and processing of DNA lesions. UvrC both incises the 5' and 3' sides of the lesion. The N-terminal half is responsible for the 3' incision and the C-terminal half is responsible for the 5' incision. This chain is UvrABC system protein C, found in Pseudomonas entomophila (strain L48).